A 135-amino-acid chain; its full sequence is L-ectoine synthase (135 aa).

Belongs to the ectoine synthase family.

It catalyses the reaction (2S)-4-acetamido-2-aminobutanoate = L-ectoine + H2O. It functions in the pathway amine and polyamine biosynthesis; ectoine biosynthesis; L-ectoine from L-aspartate 4-semialdehyde: step 3/3. Its function is as follows. Catalyzes the circularization of gamma-N-acetyl-alpha,gamma-diaminobutyric acid (ADABA) to ectoine (1,4,5,6-tetrahydro-2-methyl-4-pyrimidine carboxylic acid), which is an excellent osmoprotectant. The chain is L-ectoine synthase from Hyphomonas neptunium (strain ATCC 15444).